We begin with the raw amino-acid sequence, 653 residues long: Dual specificity protein kinase shkB (653 aa).

The tract at residues 112–133 is disordered; the sequence is NPNNNNNNSNNTNSSDSNQNYS. The Protein kinase domain occupies 174–432; it reads YNREAKLGSG…FAEISKQRIL (259 aa). Residues 180–188 and lysine 201 contribute to the ATP site; that span reads LGSGAFGSV. Aspartate 298 (proton acceptor) is an active-site residue. An SH2 domain is found at 534 to 625; sequence GFMAATSSKN…IKEPFEGGPF (92 aa).

Belongs to the protein kinase superfamily. TKL Ser/Thr protein kinase family. SH2 domain-containing protein kinase subfamily.

Its subcellular location is the membrane. It catalyses the reaction L-seryl-[protein] + ATP = O-phospho-L-seryl-[protein] + ADP + H(+). The enzyme catalyses L-threonyl-[protein] + ATP = O-phospho-L-threonyl-[protein] + ADP + H(+). Required for proper chemotaxis and phagocytosis; proper spatiotemporal control of F-actin levels in chemotaxing cells. Negative regulator of the PI3K (phosphatidylinositol 3 kinase) pathway. Predominantly phosphorylates serines and threonines and tyrosines at a lower level. The polypeptide is Dual specificity protein kinase shkB (shkB) (Dictyostelium discoideum (Social amoeba)).